The chain runs to 142 residues: Large ribosomal subunit protein uL11 (142 aa).

Belongs to the universal ribosomal protein uL11 family. As to quaternary structure, part of the ribosomal stalk of the 50S ribosomal subunit. Interacts with L10 and the large rRNA to form the base of the stalk. L10 forms an elongated spine to which L12 dimers bind in a sequential fashion forming a multimeric L10(L12)X complex. Post-translationally, one or more lysine residues are methylated.

Forms part of the ribosomal stalk which helps the ribosome interact with GTP-bound translation factors. The sequence is that of Large ribosomal subunit protein uL11 from Rhodopseudomonas palustris (strain BisA53).